We begin with the raw amino-acid sequence, 124 residues long: Small ribosomal subunit protein uS12 (124 aa).

The tract at residues methionine 1–aspartate 25 is disordered.

It belongs to the universal ribosomal protein uS12 family. Part of the 30S ribosomal subunit. Contacts proteins S8 and S17. May interact with IF1 in the 30S initiation complex.

With S4 and S5 plays an important role in translational accuracy. In terms of biological role, interacts with and stabilizes bases of the 16S rRNA that are involved in tRNA selection in the A site and with the mRNA backbone. Located at the interface of the 30S and 50S subunits, it traverses the body of the 30S subunit contacting proteins on the other side and probably holding the rRNA structure together. The combined cluster of proteins S8, S12 and S17 appears to hold together the shoulder and platform of the 30S subunit. The protein is Small ribosomal subunit protein uS12 of Xylella fastidiosa (strain 9a5c).